The chain runs to 659 residues: Mannosyl-oligosaccharide 1,2-alpha-mannosidase IA (659 aa).

At 1–48 (MPVGGLLPLFSSPAGGGLGGGLGGGLGGGGGGGGRKGSGPSAFRLTEK) the chain is on the cytoplasmic side. The helical; Signal-anchor for type II membrane protein transmembrane segment at 49 to 69 (FVLLLVFSAFITLCFGAIFFL) threads the bilayer. Residues 70-659 (PDSSKLLSGV…NIKKVEDNEK (590 aa)) lie on the Lumenal side of the membrane. Residues 88 to 121 (QPAADHKPGPGARAEDAADGRARPGEEGAPGDPA) form a disordered region. Over residues 91–113 (ADHKPGPGARAEDAADGRARPGE) the composition is skewed to basic and acidic residues. Cysteine 482 and cysteine 514 are joined by a disulfide. The Proton donor role is filled by glutamate 528. Residue threonine 639 participates in Ca(2+) binding.

Belongs to the glycosyl hydrolase 47 family. Requires Ca(2+) as cofactor.

The protein localises to the endoplasmic reticulum membrane. The enzyme catalyses N(4)-(alpha-D-Man-(1-&gt;2)-alpha-D-Man-(1-&gt;2)-alpha-D-Man-(1-&gt;3)-[alpha-D-Man-(1-&gt;2)-alpha-D-Man-(1-&gt;3)-[alpha-D-Man-(1-&gt;2)-alpha-D-Man-(1-&gt;6)]-alpha-D-Man-(1-&gt;6)]-beta-D-Man-(1-&gt;4)-beta-D-GlcNAc-(1-&gt;4)-beta-D-GlcNAc)-L-asparaginyl-[protein] (N-glucan mannose isomer 9A1,2,3B1,2,3) + 4 H2O = N(4)-(alpha-D-Man-(1-&gt;3)-[alpha-D-Man-(1-&gt;3)-[alpha-D-Man-(1-&gt;6)]-alpha-D-Man-(1-&gt;6)]-beta-D-Man-(1-&gt;4)-beta-D-GlcNAc-(1-&gt;4)-beta-D-GlcNAc)-L-asparaginyl-[protein] (N-glucan mannose isomer 5A1,2) + 4 beta-D-mannose. It catalyses the reaction N(4)-(alpha-D-Man-(1-&gt;2)-alpha-D-Man-(1-&gt;2)-alpha-D-Man-(1-&gt;3)-[alpha-D-Man-(1-&gt;3)-[alpha-D-Man-(1-&gt;2)-alpha-D-Man-(1-&gt;6)]-alpha-D-Man-(1-&gt;6)]-beta-D-Man-(1-&gt;4)-beta-D-GlcNAc-(1-&gt;4)-beta-D-GlcNAc)-L-asparaginyl-[protein] (N-glucan mannose isomer 8A1,2,3B1,3) + 3 H2O = N(4)-(alpha-D-Man-(1-&gt;3)-[alpha-D-Man-(1-&gt;3)-[alpha-D-Man-(1-&gt;6)]-alpha-D-Man-(1-&gt;6)]-beta-D-Man-(1-&gt;4)-beta-D-GlcNAc-(1-&gt;4)-beta-D-GlcNAc)-L-asparaginyl-[protein] (N-glucan mannose isomer 5A1,2) + 3 beta-D-mannose. It functions in the pathway protein modification; protein glycosylation. With respect to regulation, inhibited by both 1-deoxymannojirimycin and kifunensine. Functionally, involved in the maturation of Asn-linked oligosaccharides. Progressively trim alpha-1,2-linked mannose residues from Man(9)GlcNAc(2) to produce Man(5)GlcNAc(2). The protein is Mannosyl-oligosaccharide 1,2-alpha-mannosidase IA (MAN1A1) of Sus scrofa (Pig).